Consider the following 258-residue polypeptide: UPF0246 protein YaaA (258 aa).

This sequence belongs to the UPF0246 family.

This chain is UPF0246 protein YaaA, found in Escherichia coli O157:H7.